The primary structure comprises 203 residues: Cytochrome c oxidase assembly protein CtaG (203 aa).

Over 1 to 19 (MDAGKAERRAGNGRRTDGR) the chain is Cytoplasmic. A helical; Signal-anchor for type II membrane protein transmembrane segment spans residues 20-42 (RHLVVAAACAAFIAAMVGVTYAS). Topologically, residues 43-203 (VPLYAMFCAL…AAARASGTGG (161 aa)) are periplasmic.

It belongs to the COX11/CtaG family.

Its subcellular location is the cell inner membrane. Its function is as follows. Exerts its effect at some terminal stage of cytochrome c oxidase synthesis, probably by being involved in the insertion of the copper B into subunit I. This chain is Cytochrome c oxidase assembly protein CtaG, found in Xanthobacter autotrophicus (strain ATCC BAA-1158 / Py2).